The chain runs to 290 residues: Aquaporin-3 (290 aa).

Residues 1 to 24 (MGRQKELVTRCGEMLHIRYRLLRQ) are Cytoplasmic-facing. The helical transmembrane segment at 25-42 (ALAECLGTLILVMFGCGS) threads the bilayer. The Extracellular segment spans residues 43–56 (VAQVVLSRGTHGGF). Residues 57–74 (LTINLAFGFAVTLGILVA) form a helical membrane-spanning segment. Over 75-78 (GQVS) the chain is Cytoplasmic. An intramembrane region (discontinuously helical) is located at residues 79-92 (GAHLNPAVTFAMCF). Positions 83-85 (NPA) match the NPA 1 motif. Residues 93 to 100 (LAREPWIK) are Cytoplasmic-facing. A helical membrane pass occupies residues 101-121 (LPVYTLAQTLGAFLGAGIIFG). Residues 122–159 (LYYDAIWAFANNQLIVSGPNGTAGIFATYPSGHLDMVN) are Extracellular-facing. Asn-141 carries an N-linked (GlcNAc...) asparagine glycan. A helical membrane pass occupies residues 160 to 177 (GFFDQFIGTASLIVCVLA). At 178–189 (IVDPNNNPVPRG) the chain is on the cytoplasmic side. A helical transmembrane segment spans residues 190–206 (LEAFTVGLVVLVIGTSM). Over 207 to 210 (GFNS) the chain is Extracellular. Positions 211-224 (GYAVNPARDFGPRL) form an intramembrane region, discontinuously helical. The NPA 2 motif lies at 215 to 217 (NPA). At 225 to 242 (FTAIAGWGSEVFTTGRHW) the chain is on the extracellular side. A helical membrane pass occupies residues 243 to 264 (WWVPIASPLLGSIAGVFVYQLM). The Cytoplasmic segment spans residues 265–290 (IGCHLEPPPPSTDEENVKLSQVKHKE).

This sequence belongs to the MIP/aquaporin (TC 1.A.8) family. Homotetramer; each monomer provides an independent glycerol/water pore. Could also exist in other oligomeric states. In terms of tissue distribution, highly expressed in stomach and spleen, with lower expression in kidney and lung.

Its subcellular location is the cell membrane. The protein localises to the basolateral cell membrane. The enzyme catalyses glycerol(in) = glycerol(out). It carries out the reaction H2O(in) = H2O(out). The catalysed reaction is urea(in) = urea(out). It catalyses the reaction H2O2(out) = H2O2(in). Its function is as follows. Aquaglyceroporins form homotetrameric transmembrane channels, with each monomer independently mediating glycerol and water transport across the plasma membrane along their osmotic gradient. Could also be permeable to urea. Also participates in cell permeability to H2O2 and H2O2-mediated signaling. In skin, transports glycerol to the epidermis and stratum corneum, where it maintains hydration, elasticity, and supports lipid biosynthesis for barrier repair. In kidney, contributes to the reabsorption of water, helping the body maintain proper fluid balance. The sequence is that of Aquaporin-3 from Sus scrofa (Pig).